The primary structure comprises 334 residues: Holliday junction branch migration complex subunit RuvB (334 aa).

Residues 4-184 are large ATPase domain (RuvB-L); it reads ADRLVSAGVI…FGIVQRLEFY (181 aa). ATP contacts are provided by residues Ile-23, Arg-24, Gly-65, Lys-68, Thr-69, Thr-70, 131–133, Arg-174, Tyr-184, and Arg-221; that span reads EDY. Thr-69 is a Mg(2+) binding site. A small ATPAse domain (RuvB-S) region spans residues 185-255; the sequence is RVEDLQHIVG…VASRALDMLS (71 aa). The segment at 258–334 is head domain (RuvB-H); it reads SEGFDYMDRK…YKHFGITREG (77 aa). Positions 294, 313, and 318 each coordinate DNA.

Belongs to the RuvB family. As to quaternary structure, homohexamer. Forms an RuvA(8)-RuvB(12)-Holliday junction (HJ) complex. HJ DNA is sandwiched between 2 RuvA tetramers; dsDNA enters through RuvA and exits via RuvB. An RuvB hexamer assembles on each DNA strand where it exits the tetramer. Each RuvB hexamer is contacted by two RuvA subunits (via domain III) on 2 adjacent RuvB subunits; this complex drives branch migration. In the full resolvosome a probable DNA-RuvA(4)-RuvB(12)-RuvC(2) complex forms which resolves the HJ.

It is found in the cytoplasm. The catalysed reaction is ATP + H2O = ADP + phosphate + H(+). The RuvA-RuvB-RuvC complex processes Holliday junction (HJ) DNA during genetic recombination and DNA repair, while the RuvA-RuvB complex plays an important role in the rescue of blocked DNA replication forks via replication fork reversal (RFR). RuvA specifically binds to HJ cruciform DNA, conferring on it an open structure. The RuvB hexamer acts as an ATP-dependent pump, pulling dsDNA into and through the RuvAB complex. RuvB forms 2 homohexamers on either side of HJ DNA bound by 1 or 2 RuvA tetramers; 4 subunits per hexamer contact DNA at a time. Coordinated motions by a converter formed by DNA-disengaged RuvB subunits stimulates ATP hydrolysis and nucleotide exchange. Immobilization of the converter enables RuvB to convert the ATP-contained energy into a lever motion, pulling 2 nucleotides of DNA out of the RuvA tetramer per ATP hydrolyzed, thus driving DNA branch migration. The RuvB motors rotate together with the DNA substrate, which together with the progressing nucleotide cycle form the mechanistic basis for DNA recombination by continuous HJ branch migration. Branch migration allows RuvC to scan DNA until it finds its consensus sequence, where it cleaves and resolves cruciform DNA. The protein is Holliday junction branch migration complex subunit RuvB of Erwinia tasmaniensis (strain DSM 17950 / CFBP 7177 / CIP 109463 / NCPPB 4357 / Et1/99).